Consider the following 377-residue polypeptide: Dehydrogenase/reductase SDR family member 13 (377 aa).

A signal peptide spans Met1–Ala25. Residues Ser46 and Ile48 each contribute to the NAD(+) site. Residue Ser170 coordinates substrate. Tyr197, Lys201, and Ser232 together coordinate NAD(+). Tyr197 acts as the Proton acceptor in catalysis. The segment at Leu310–Thr363 is disordered. A compositionally biased stretch (acidic residues) spans Glu317–Pro327. Positions Glu328–Ser337 are enriched in low complexity. A compositionally biased stretch (polar residues) spans Ser352–Thr363.

Belongs to the short-chain dehydrogenases/reductases (SDR) family.

Its subcellular location is the secreted. Putative oxidoreductase. The polypeptide is Dehydrogenase/reductase SDR family member 13 (DHRS13) (Bos taurus (Bovine)).